The sequence spans 172 residues: NADH-ubiquinone oxidoreductase chain 6 (172 aa).

Transmembrane regions (helical) follow at residues Met1 to Leu21, Ile26 to Gly48, Gly52 to Ala74, Trp86 to Phe106, and Cys147 to Ile167.

Belongs to the complex I subunit 6 family. In terms of assembly, core subunit of respiratory chain NADH dehydrogenase (Complex I) which is composed of 45 different subunits.

Its subcellular location is the mitochondrion inner membrane. It carries out the reaction a ubiquinone + NADH + 5 H(+)(in) = a ubiquinol + NAD(+) + 4 H(+)(out). Core subunit of the mitochondrial membrane respiratory chain NADH dehydrogenase (Complex I) which catalyzes electron transfer from NADH through the respiratory chain, using ubiquinone as an electron acceptor. Essential for the catalytic activity and assembly of complex I. The protein is NADH-ubiquinone oxidoreductase chain 6 of Rattus norvegicus (Rat).